Consider the following 559-residue polypeptide: Tryprostatin B 6-hydroxylase (559 aa).

A run of 3 helical transmembrane segments spans residues Pro-13 to Tyr-35, Tyr-48 to Ala-65, and Val-82 to Phe-104. Cys-502 is a binding site for heme.

It belongs to the cytochrome P450 family. It depends on heme as a cofactor.

It localises to the membrane. It catalyses the reaction tryprostatin B + reduced [NADPH--hemoprotein reductase] + O2 = 6-hydroxytryprostatin B + oxidized [NADPH--hemoprotein reductase] + H2O + H(+). Its pathway is mycotoxin biosynthesis. In terms of biological role, cytochrome P450 monooxygenase; part of the gene cluster that mediates the biosynthesis of fumitremorgins, indole alkaloids that carry not only intriguing chemical structures, but also interesting biological and pharmacological activities. The biosynthesis of fumitremorgin-type alkaloids begins by condensation of the two amino acids L-tryptophan and L-proline to brevianamide F, catalyzed by the non-ribosomal peptide synthetase ftmA. Brevianamide F is then prenylated by the prenyltransferase ftmPT1/ftmB in the presence of dimethylallyl diphosphate, resulting in the formation of tryprostatin B. The three cytochrome P450 monooxygenases, ftmP450-1/ftmC, ftmP450-2/ftmE and ftmP450-3/FtmG, are responsible for the conversion of tryprostatin B to 6-hydroxytryprostatin B, tryprostatin A to fumitremorgin C and fumitremorgin C to 12,13-dihydroxyfumitremorgin C, respectively. The putative methyltransferase ftmMT/ftmD is expected for the conversion of 6-hydroxytryprostatin B to tryprostatin A. FtmPT2/FtmH catalyzes the prenylation of 12,13-dihydroxyfumitre-morgin C in the presence of dimethylallyl diphosphate, resulting in the formation of fumitremorgin B. Fumitremorgin B is further converted to verruculogen by ftmOx1/ftmF via the insertion of an endoperoxide bond between the two prenyl moieties. In some fungal species, verruculogen is further converted to fumitremorgin A, but the enzymes involved in this step have not been identified yet. This chain is Tryprostatin B 6-hydroxylase, found in Aspergillus fumigatus (Neosartorya fumigata).